Here is a 776-residue protein sequence, read N- to C-terminus: Mitochondrial intermediate peptidase (776 aa).

The transit peptide at M1–S28 directs the protein to the mitochondrion. H561 is a Zn(2+) binding site. E562 is an active-site residue. Positions 565 and 568 each coordinate Zn(2+).

Belongs to the peptidase M3 family. It depends on Zn(2+) as a cofactor.

It is found in the mitochondrion matrix. It carries out the reaction Release of an N-terminal octapeptide as second stage of processing of some proteins imported into the mitochondrion.. Its function is as follows. Cleaves proteins, imported into the mitochondrion, to their mature size. While most mitochondrial precursor proteins are processed to the mature form in one step by mitochondrial processing peptidase (MPP), the sequential cleavage by MIP of an octapeptide after initial processing by MPP is a required step for a subgroup of nuclear-encoded precursor proteins destined for the matrix or the inner membrane. The sequence is that of Mitochondrial intermediate peptidase (OCT1) from Yarrowia lipolytica (strain CLIB 122 / E 150) (Yeast).